The primary structure comprises 205 residues: High frequency lysogenization protein HflD homolog (205 aa).

The protein belongs to the HflD family.

It is found in the cytoplasm. Its subcellular location is the cell inner membrane. This is High frequency lysogenization protein HflD homolog from Haemophilus influenzae (strain ATCC 51907 / DSM 11121 / KW20 / Rd).